Reading from the N-terminus, the 600-residue chain is Putative heme-binding protein NP_2262A (600 aa).

Histidine 180 provides a ligand contact to heme. The disordered stretch occupies residues threonine 261–aspartate 289. A compositionally biased stretch (polar residues) spans aspartate 270–aspartate 285. The 89-residue stretch at glycine 510–phenylalanine 598 folds into the ABM domain.

This sequence in the N-terminal section; belongs to the ChdC family.

In Natronomonas pharaonis (strain ATCC 35678 / DSM 2160 / CIP 103997 / JCM 8858 / NBRC 14720 / NCIMB 2260 / Gabara) (Halobacterium pharaonis), this protein is Putative heme-binding protein NP_2262A.